A 747-amino-acid polypeptide reads, in one-letter code: Protein O-mannosyl-transferase 1 (747 aa).

7 helical membrane passes run 30 to 50 (PLVV…LGLL), 90 to 110 (FGHM…NFLW), 121 to 141 (VPVW…VPMA), 176 to 196 (LLES…LKFF), 205 to 225 (SVHW…AVGI), 228 to 248 (MGIF…WHLI), and 267 to 287 (VALL…HLML). MIR domains are found at residues 318 to 381 (PLEV…VKDP), 392 to 449 (PRPV…LDIV), and 453 to 513 (SNQD…VEEH). Asn-435, Asn-471, and Asn-539 each carry an N-linked (GlcNAc...) asparagine glycan. Helical transmembrane passes span 597 to 617 (IVIW…FFWY), 636 to 656 (WVLA…PFFL), and 660 to 680 (MLFL…LPIV).

The protein belongs to the glycosyltransferase 39 family.

It is found in the endoplasmic reticulum membrane. The catalysed reaction is a di-trans,poly-cis-dolichyl beta-D-mannosyl phosphate + L-seryl-[protein] = 3-O-(alpha-D-mannosyl)-L-seryl-[protein] + a di-trans,poly-cis-dolichyl phosphate + H(+). The enzyme catalyses a di-trans,poly-cis-dolichyl beta-D-mannosyl phosphate + L-threonyl-[protein] = 3-O-(alpha-D-mannosyl)-L-threonyl-[protein] + a di-trans,poly-cis-dolichyl phosphate + H(+). It participates in protein modification; protein glycosylation. In terms of biological role, transfers mannosyl residues to the hydroxyl group of serine or threonine residues. Coexpression of both POMT1 and POMT2 is necessary for enzyme activity, expression of either POMT1 or POMT2 alone is insufficient. Essentially dedicated to O-mannosylation of alpha-DAG1 and few other proteins but not of cadherins and protocaherins. This Rattus norvegicus (Rat) protein is Protein O-mannosyl-transferase 1 (Pomt1).